A 304-amino-acid polypeptide reads, in one-letter code: Protein translocase subunit SecF (304 aa).

The next 6 helical transmembrane spans lie at 20 to 40 (AKLFFIISGVLIVISLFLIFT), 143 to 163 (AMMALLYANIGVLIYVAIRFE), 164 to 184 (LIFAIGAILALVHDVIITLGF), 195 to 215 (TVVAALLALIGYSLNDTIVVF), 244 to 266 (LSRTIITSLLTFFTVLSLMIFGG), and 276 to 298 (LVIGIIVGTYSSIGIASGLVYLI).

The protein belongs to the SecD/SecF family. SecF subfamily. As to quaternary structure, forms a complex with SecD. Part of the essential Sec protein translocation apparatus which comprises SecA, SecYEG and auxiliary proteins SecDF. Other proteins may also be involved.

The protein localises to the cell inner membrane. Its function is as follows. Part of the Sec protein translocase complex. Interacts with the SecYEG preprotein conducting channel. SecDF uses the proton motive force (PMF) to complete protein translocation after the ATP-dependent function of SecA. The protein is Protein translocase subunit SecF of Calditerrivibrio nitroreducens (strain DSM 19672 / NBRC 101217 / Yu37-1).